The primary structure comprises 335 residues: Ig gamma-2A chain C region secreted form (335 aa).

Ig-like domains follow at residues 6–98, 126–225, and 234–330; these read PSVY…KKIE, PSVF…KTIS, and PQVY…KTIS. Asparagine 185 is a glycosylation site (N-linked (GlcNAc...) asparagine).

Its subcellular location is the secreted. In Mus musculus (Mouse), this protein is Ig gamma-2A chain C region secreted form.